We begin with the raw amino-acid sequence, 251 residues long: Adenosylcobinamide-GDP ribazoletransferase (251 aa).

The next 7 helical transmembrane spans lie at 36-56 (LYPF…FVLS), 60-80 (VPIM…TGFL), 110-130 (VGAF…AGMF), 141-161 (ILIF…VSQE), 181-201 (EIIL…TLGI), 202-222 (NYLI…LKVK), and 231-251 (DVAG…LGII).

This sequence belongs to the CobS family. Mg(2+) is required as a cofactor.

The protein localises to the cell membrane. The enzyme catalyses alpha-ribazole + adenosylcob(III)inamide-GDP = adenosylcob(III)alamin + GMP + H(+). It catalyses the reaction alpha-ribazole 5'-phosphate + adenosylcob(III)inamide-GDP = adenosylcob(III)alamin 5'-phosphate + GMP + H(+). It functions in the pathway cofactor biosynthesis; adenosylcobalamin biosynthesis; adenosylcobalamin from cob(II)yrinate a,c-diamide: step 7/7. Its function is as follows. Joins adenosylcobinamide-GDP and alpha-ribazole to generate adenosylcobalamin (Ado-cobalamin). Also synthesizes adenosylcobalamin 5'-phosphate from adenosylcobinamide-GDP and alpha-ribazole 5'-phosphate. This is Adenosylcobinamide-GDP ribazoletransferase from Clostridium perfringens (strain ATCC 13124 / DSM 756 / JCM 1290 / NCIMB 6125 / NCTC 8237 / Type A).